The sequence spans 265 residues: tRNA (guanine-N(1)-)-methyltransferase (265 aa).

S-adenosyl-L-methionine-binding positions include Gly-119 and 139-144; that span reads IGDYVL.

The protein belongs to the RNA methyltransferase TrmD family. As to quaternary structure, homodimer.

It is found in the cytoplasm. The catalysed reaction is guanosine(37) in tRNA + S-adenosyl-L-methionine = N(1)-methylguanosine(37) in tRNA + S-adenosyl-L-homocysteine + H(+). Specifically methylates guanosine-37 in various tRNAs. This Alcanivorax borkumensis (strain ATCC 700651 / DSM 11573 / NCIMB 13689 / SK2) protein is tRNA (guanine-N(1)-)-methyltransferase.